The following is a 94-amino-acid chain: Large ribosomal subunit protein uL23 (94 aa).

It belongs to the universal ribosomal protein uL23 family. As to quaternary structure, part of the 50S ribosomal subunit. Contacts protein L29, and trigger factor when it is bound to the ribosome.

In terms of biological role, one of the early assembly proteins it binds 23S rRNA. One of the proteins that surrounds the polypeptide exit tunnel on the outside of the ribosome. Forms the main docking site for trigger factor binding to the ribosome. The chain is Large ribosomal subunit protein uL23 from Akkermansia muciniphila (strain ATCC BAA-835 / DSM 22959 / JCM 33894 / BCRC 81048 / CCUG 64013 / CIP 107961 / Muc).